Reading from the N-terminus, the 99-residue chain is Aspartyl/glutamyl-tRNA(Asn/Gln) amidotransferase subunit C (99 aa).

It belongs to the GatC family. As to quaternary structure, heterotrimer of A, B and C subunits.

The enzyme catalyses L-glutamyl-tRNA(Gln) + L-glutamine + ATP + H2O = L-glutaminyl-tRNA(Gln) + L-glutamate + ADP + phosphate + H(+). It catalyses the reaction L-aspartyl-tRNA(Asn) + L-glutamine + ATP + H2O = L-asparaginyl-tRNA(Asn) + L-glutamate + ADP + phosphate + 2 H(+). In terms of biological role, allows the formation of correctly charged Asn-tRNA(Asn) or Gln-tRNA(Gln) through the transamidation of misacylated Asp-tRNA(Asn) or Glu-tRNA(Gln) in organisms which lack either or both of asparaginyl-tRNA or glutaminyl-tRNA synthetases. The reaction takes place in the presence of glutamine and ATP through an activated phospho-Asp-tRNA(Asn) or phospho-Glu-tRNA(Gln). In Leptothrix cholodnii (strain ATCC 51168 / LMG 8142 / SP-6) (Leptothrix discophora (strain SP-6)), this protein is Aspartyl/glutamyl-tRNA(Asn/Gln) amidotransferase subunit C.